Reading from the N-terminus, the 286-residue chain is Nucleotide-binding protein HS_1178 (286 aa).

8–15 (GRSGAGKS) contacts ATP. Residue 56-59 (DIRN) coordinates GTP.

The protein belongs to the RapZ-like family.

Functionally, displays ATPase and GTPase activities. The sequence is that of Nucleotide-binding protein HS_1178 from Histophilus somni (strain 129Pt) (Haemophilus somnus).